The following is a 228-amino-acid chain: Ribonuclease 3 (228 aa).

Residues 2-130 (LTYLEQKINY…LLAAVYLDGG (129 aa)) enclose the RNase III domain. Residue E43 coordinates Mg(2+). Residue D47 is part of the active site. Positions 116 and 119 each coordinate Mg(2+). Residue E119 is part of the active site. The region spanning 157–226 (DYKTRLQEVV…AMEALSKLGI (70 aa)) is the DRBM domain.

It belongs to the ribonuclease III family. Homodimer. It depends on Mg(2+) as a cofactor.

It is found in the cytoplasm. It carries out the reaction Endonucleolytic cleavage to 5'-phosphomonoester.. In terms of biological role, digests double-stranded RNA. Involved in the processing of primary rRNA transcript to yield the immediate precursors to the large and small rRNAs (23S and 16S). Processes some mRNAs, and tRNAs when they are encoded in the rRNA operon. Processes pre-crRNA and tracrRNA of type II CRISPR loci if present in the organism. The polypeptide is Ribonuclease 3 (Caldanaerobacter subterraneus subsp. tengcongensis (strain DSM 15242 / JCM 11007 / NBRC 100824 / MB4) (Thermoanaerobacter tengcongensis)).